The primary structure comprises 1118 residues: Collagenase ColG (1118 aa).

A signal peptide spans 1 to 45 (MKKNILKILMDSYSKESKIQTVRRVTSVSLLAVYLTMNTSSLVLA). The propeptide occupies 46-110 (KPIENTNDTS…KSKSTLRSAS (65 aa)). The S1 metalloprotease domain, degrades both FALGPA (furylacryloyl-Leu-Gly-Pro-Ala) and type I collagen stretch occupies residues 111–786 (IANTNSEKYD…QYDVVFHGVL (676 aa)). The interval 119-388 (YDFEYLNGLS…AMERITWDYD (270 aa)) is activator domain required for full activity on collagen. The segment at 389–670 (GIGSNGKKVD…IQELADKYQG (282 aa)) is catalytic subdomain. Residues 396-1118 (KVDHDKFLDD…SGNYELRVNK (723 aa)) form a degrades soluble FALGPA peptide (furylacryloyl-Leu-Gly-Pro-Ala) but not type I collagen region. Glu498 contributes to the Ca(2+) binding site. His523 contacts Zn(2+). Residue Glu524 is part of the active site. Residue His527 coordinates Zn(2+). Residues Ala531, Val535, and Gly537 each contribute to the Ca(2+) site. Glu555 is a Zn(2+) binding site. Positions 679–790 (DYLKDHGYKK…VFHGVLTDNA (112 aa)) are helper subdomain. The S2 domain stretch occupies residues 787–882 (TDNADISNNK…SFTIEIKNED (96 aa)). Residues Asn795, Lys796, Asp823, Asp825, Asp864, Glu890, Glu892, Asn894, Asp913, Asp918, Ala920, Asp921, Glu1009, Glu1011, Asn1013, Asp1014, Ser1032, Asp1037, Arg1039, and Asp1040 each coordinate Ca(2+). Positions 797–885 (APIAKVTGPS…IEIKNEDTTT (89 aa)) constitute a PKD domain. An S3a collagen-binding domain region spans residues 886–1003 (PITKEMEPND…SYSLNIKGLG (118 aa)). The segment at 1008 to 1118 (KEKENNDSSD…SGNYELRVNK (111 aa)) is S3b collagen-binding domain. Residues 1102-1106 (LVYKY) are collagen-binding.

This sequence belongs to the peptidase M9B family. Collagenase subfamily. It depends on Ca(2+) as a cofactor. The cofactor is Zn(2+). Upon purification gives 67 kDa, 78 kDa, 82 kDa and 116 kDa (full-length) proteins all of which have the same N-terminus; only the longest form digests insoluble collagen. At least 2 in vivo isolated forms (C1b and C1c) are missing the second collagen-binding domain, ending on Lys-1006 and Lys-1018 respectively.

The protein localises to the secreted. The catalysed reaction is Digestion of native collagen in the triple helical region at Xaa-|-Gly bonds. With synthetic peptides, a preference is shown for Gly at P3 and P1', Pro and Ala at P2 and P2', and hydroxyproline, Ala or Arg at P3'.. Inhibited by 1-10-phenanthroline. Inhibited by peptidomimetic isoamyl-phosphonyl-Gly-Pro-Ala, which binds to Zn(2+). Inhibited by broad-spectrum zinc metalloprotease inhibitor batimastat. N-aryl mercaptoacetamide-based inhibitors have been isolated that act on clostridial collagenases with submicromolar affinity while having negligibile activity on human collagenases. Its function is as follows. Clostridial collagenases are among the most efficient degraders of eukaryotic collagen known; saprophytes use collagen as a carbon source while pathogens additionally digest collagen to aid in host colonization. Has both tripeptidylcarboxypeptidase on Gly-X-Y and endopeptidase activities; the endopeptidase cuts within the triple helix region of collagen while tripeptidylcarboxypeptidase successively digests the exposed ends, thus clostridial collagenases can digest large sections of collagen. Active on soluble type I collagen, insoluble collagen, azocoll, soluble PZ-peptide (all collagenase substrates) and gelatin. The full-length protein has collagenase activity, while the in vivo derived C-terminally truncated shorter versions only act on gelatin. In vitro digestion of soluble calf skin collagen fibrils requires both ColG and ColH; ColG forms missing the second collagen-binding domain are also synergistic with ColH, although their overall efficiency is decreased. The activator domain (residues 119-388) and catalytic subdomain (389-670) open and close around substrate using a Gly-rich hinge (387-397), allowing digestion when the protein is closed. Binding of collagen requires Ca(2+) and is inhibited by EGTA; the collagen-binding domain (CBD, S3a plus S3b) specifically recognizes the triple-helical conformation made by 3 collagen protein chains in the triple-helical region. Isolated CBD (S3a plus S3b) binds collagen fibrils and sheets of many tissues. This Hathewaya histolytica (Clostridium histolyticum) protein is Collagenase ColG.